Consider the following 339-residue polypeptide: Bifunctional phosphoglucose/phosphomannose isomerase (339 aa).

The SIS domain occupies 22-164 (ISVNVKAEDI…IEPVDDQIEE (143 aa)). Residues glycine 41, serine 42, serine 83, serine 85, threonine 88, and arginine 135 each coordinate D-fructose 6-phosphate. Glutamate 221 (proton acceptor) is an active-site residue. D-fructose 6-phosphate contacts are provided by histidine 237 and lysine 331. The Proton donor role is filled by histidine 237. The Proton acceptor role is filled by lysine 331.

The protein belongs to the PGI/PMI family. Homodimer.

The catalysed reaction is alpha-D-glucose 6-phosphate = beta-D-fructose 6-phosphate. It catalyses the reaction D-mannose 6-phosphate = D-fructose 6-phosphate. In terms of biological role, dual specificity isomerase that catalyzes the isomerization of both glucose-6-phosphate and mannose-6-phosphate to fructose-6-phosphate. This is Bifunctional phosphoglucose/phosphomannose isomerase from Caldicellulosiruptor bescii (strain ATCC BAA-1888 / DSM 6725 / KCTC 15123 / Z-1320) (Anaerocellum thermophilum).